We begin with the raw amino-acid sequence, 638 residues long: Rik1-associated factor 1 (638 aa).

4 WD repeats span residues 297 to 336 (KEYS…CGIF), 486 to 525 (TTQK…KPLS), 544 to 583 (EVDA…PFIQ), and 587 to 626 (EMNS…GNKF).

As to quaternary structure, component of the Clr4 methyltransferase complex (ClrC) composed of at least clr4, rik1, pcu4, rbx1, raf1 and raf2. The cullin pcu4, rik1, raf1, raf2 and the ring-box protein rbx1 are components of an E3 ubiquitin ligase, whose activity is essential for heterochromatin assembly. Interacts with nup189.

Its subcellular location is the cytoplasm. It localises to the nucleus. It is found in the chromosome. Functionally, component of the Clr4 methyltransferase complex (ClrC) which contributes to the establishment of heterochromatin by specifically methylating histone H3 to form H3K9me. ClrC preferentially ubiquitylates H3K14 and ClrC-mediated H3 ubiquitination promotes clr4 methyltransferase activity for the methylation of H3K9. H3K9me represents a specific tag for epigenetic transcriptional repression by recruiting swi6/HP1 to methylated histones which leads to transcriptional silencing within centromeric heterochromatin, telomeric regions and at the silent mating-type loci. Has a role in both mitotic and meiotic chromosome segregation. This is Rik1-associated factor 1 (raf1) from Schizosaccharomyces pombe (strain 972 / ATCC 24843) (Fission yeast).